Consider the following 368-residue polypeptide: Chaperone protein DnaJ (368 aa).

In terms of domain architecture, J spans Asp5 to Gly70. The segment at Gly124–His201 adopts a CR-type zinc-finger fold. Residues Cys137, Cys140, Cys153, Cys156, Cys175, Cys178, Cys189, and Cys192 each contribute to the Zn(2+) site. 4 CXXCXGXG motif repeats span residues Cys137–Gly144, Cys153–Gly160, Cys175–Gly182, and Cys189–Gly196.

The protein belongs to the DnaJ family. In terms of assembly, homodimer. It depends on Zn(2+) as a cofactor.

It localises to the cytoplasm. Functionally, participates actively in the response to hyperosmotic and heat shock by preventing the aggregation of stress-denatured proteins and by disaggregating proteins, also in an autonomous, DnaK-independent fashion. Unfolded proteins bind initially to DnaJ; upon interaction with the DnaJ-bound protein, DnaK hydrolyzes its bound ATP, resulting in the formation of a stable complex. GrpE releases ADP from DnaK; ATP binding to DnaK triggers the release of the substrate protein, thus completing the reaction cycle. Several rounds of ATP-dependent interactions between DnaJ, DnaK and GrpE are required for fully efficient folding. Also involved, together with DnaK and GrpE, in the DNA replication of plasmids through activation of initiation proteins. This Xylella fastidiosa (strain M12) protein is Chaperone protein DnaJ.